We begin with the raw amino-acid sequence, 1001 residues long: MAAAMVSSAGGLLAMLNEPHPSLKLHALSYLIRLVDQFWPEISTSVPIIESLYEDEEFDQHQRQLAALLASKVFYYLGELNDSLSYALGAGSLFDVSEDSDYIHTLLSKAIDEYAILRSKAVESSEVVEIDPRLVAIVERMLDKCITDGKYQQAMGIAIECRRLDKLEEAIIKSENVQGTLSYCINVSHSFVNQREYRHEVLRLLVNVYQKLASPDYLSICQCLMFLDEPQGVASILEKLLRSENKDDALLAFQISFDLVQNEHQAFLMSVRDRLPAPKTRPVEAIQAVETSTAQNENTAGDVQMADETPSQTIVHETDPVDAVYAERLTKAKGILSGETSIQLTLQFLYSHNKSDLLILKTIKQSVEMRNSVCHSATIYANAIMHAGTTVDTFLRENLDWLSRATNWAKFSATAGLGVIHRGHLQQGRSLMAPYLPQGGAGGGGSPYSEGGALYALGLIHANHGEGIKQFLRDSLRSTSVEVIQHGACLGLGLAALGTADEDIYDDIKSVLYTDSAVAGEAAGISMGLLLVGTATDKASEMLAYAHETQHEKIIRGLALGIALTVYGREEGADTLIEQMTRDQDPIIRYGGMYALALAYSGTANNKAIRQLLHFAVSDVSDDVRRTAVLALGFVLYSDPEQTPRIVSLLSESYNPHVRYGAALAVGISCAGTGLSEAISLLEPLTSDVVDFVRQGALIAMAMVMVQISEASDSRVGAFRRQLEKIILDKHEDTMSKMGAILASGILDAGGRNVTIRLLSKTKHDKVTAVIGLTVFSQFWYWYPLIYFISLAFSPTAFIGLNYDLKVPKFEFMSHAKPSLFEYPKPTTVATANTAAKLPTAVLSTSAKAKAKAKKEAEQKAKAENSGNEAGKANAASDEKEAESMQVDSTATTVEKKVEPEATFEILVNPARVVPSQEKYIKLMEDSRYVPMKLAPSGFVLLRDLRPHEPEVLSLTDAPTSTASPAVGAEAAGQAQQAATTSAMAIDDEPQPPQAFEYASP.

Residue alanine 2 is modified to N-acetylalanine. Lysine 166 participates in a covalent cross-link: Glycyl lysine isopeptide (Lys-Gly) (interchain with G-Cter in ubiquitin). PC repeat units lie at residues 412-447, 452-485, 487-521, 522-555, 557-590, 591-626, 627-659, 661-695, 696-736, and 739-771; these read SATA…GGSP, GALY…EVIQ, GACL…VAGE, AAGI…EKII, GLAL…IIRY, GGMY…DVRR, TAVL…PHVR, GAAL…FVRQ, GALI…DTMS, and GAIL…TAVI. Disordered stretches follow at residues 853–896 and 954–1001; these read AKKE…TVEK and SLTD…YASP. Residues 854 to 863 show a composition bias toward basic and acidic residues; sequence KKEAEQKAKA. Serine 889 carries the post-translational modification Phosphoserine. The segment covering 961 to 985 has biased composition (low complexity); it reads STASPAVGAEAAGQAQQAATTSAMA.

Belongs to the proteasome subunit S1 family. As to quaternary structure, component of the 19S regulatory particle (RP/PA700) base subcomplex of the 26S proteasome. The 26S proteasome is composed of a core protease (CP), known as the 20S proteasome, capped at one or both ends by the 19S regulatory particle (RP/PA700). The RP/PA700 complex is composed of at least 17 different subunits in two subcomplexes, the base and the lid, which form the portions proximal and distal to the 20S proteolytic core, respectively.

Functionally, acts as a regulatory subunit of the 26 proteasome which is involved in the ATP-dependent degradation of ubiquitinated proteins. The polypeptide is 26S proteasome non-ATPase regulatory subunit 1 homolog B (RPN2B) (Arabidopsis thaliana (Mouse-ear cress)).